The primary structure comprises 246 residues: U11/U12 small nuclear ribonucleoprotein 35 kDa protein (246 aa).

Residues 51 to 129 (LTLFVARLNL…HEIFVDYELE (79 aa)) form the RRM domain. Lys172 participates in a covalent cross-link: Glycyl lysine isopeptide (Lys-Gly) (interchain with G-Cter in SUMO2). Residues 187-217 (SRSRERHWDSRTRDRDHDRGREKRWQEREPT) form a disordered region. The segment covering 192–217 (RHWDSRTRDRDHDRGREKRWQEREPT) has biased composition (basic and acidic residues).

As to quaternary structure, component of the U11/U12 snRNPs that are part of the U12-type spliceosome. Expressed in heart, liver, skeletal muscle and pancreas.

The protein resides in the nucleus. This chain is U11/U12 small nuclear ribonucleoprotein 35 kDa protein (SNRNP35), found in Homo sapiens (Human).